Consider the following 392-residue polypeptide: Tryptophan synthase beta chain 1 (392 aa).

Lys85 is modified (N6-(pyridoxal phosphate)lysine).

Belongs to the TrpB family. Tetramer of two alpha and two beta chains. The cofactor is pyridoxal 5'-phosphate.

The enzyme catalyses (1S,2R)-1-C-(indol-3-yl)glycerol 3-phosphate + L-serine = D-glyceraldehyde 3-phosphate + L-tryptophan + H2O. It participates in amino-acid biosynthesis; L-tryptophan biosynthesis; L-tryptophan from chorismate: step 5/5. Its function is as follows. The beta subunit is responsible for the synthesis of L-tryptophan from indole and L-serine. The polypeptide is Tryptophan synthase beta chain 1 (trpB1) (Methanothermobacter thermautotrophicus (strain ATCC 29096 / DSM 1053 / JCM 10044 / NBRC 100330 / Delta H) (Methanobacterium thermoautotrophicum)).